A 75-amino-acid polypeptide reads, in one-letter code: Large ribosomal subunit protein bL32c (75 aa).

Positions 49–75 (SPGPTTPIKPNPKKQTGRRPRSQRRRT) are disordered. A compositionally biased stretch (basic residues) spans 59 to 75 (NPKKQTGRRPRSQRRRT).

The protein belongs to the bacterial ribosomal protein bL32 family.

It localises to the plastid. The protein localises to the chloroplast. The protein is Large ribosomal subunit protein bL32c of Nephroselmis olivacea (Green alga).